The sequence spans 707 residues: Polyribonucleotide nucleotidyltransferase (707 aa).

Residues Asp488 and Asp494 each coordinate Mg(2+). Positions 555-615 constitute a KH domain; sequence PIIKVTKIDP…ENVDNAIALI (61 aa). The region spanning 625–692 is the S1 motif domain; the sequence is GEILEGKITR…DLGRLQFKRV (68 aa).

This sequence belongs to the polyribonucleotide nucleotidyltransferase family. Mg(2+) is required as a cofactor.

It localises to the cytoplasm. The catalysed reaction is RNA(n+1) + phosphate = RNA(n) + a ribonucleoside 5'-diphosphate. Involved in mRNA degradation. Catalyzes the phosphorolysis of single-stranded polyribonucleotides processively in the 3'- to 5'-direction. This chain is Polyribonucleotide nucleotidyltransferase, found in Thermotoga neapolitana (strain ATCC 49049 / DSM 4359 / NBRC 107923 / NS-E).